Reading from the N-terminus, the 507-residue chain is Cystathionine beta-synthase (507 aa).

Lysine 53 carries the N6-(pyridoxal phosphate)lysine modification. Residue asparagine 84 coordinates pyridoxal 5'-phosphate. Residue serine 134 is modified to Phosphoserine. Residues 196-200 and serine 289 each bind pyridoxal 5'-phosphate; that span reads GTGGT. Phosphoserine is present on residues serine 350 and serine 424. In terms of domain architecture, CBS spans 373–432; that stretch reads HLKPVVSVKETAKVTDVIKILKDNGFDQLPVLTEDGKLSGLVTLSELLRKLSINNSNNDN.

The protein belongs to the cysteine synthase/cystathionine beta-synthase family. It depends on pyridoxal 5'-phosphate as a cofactor.

The enzyme catalyses L-homocysteine + L-serine = L,L-cystathionine + H2O. Its pathway is amino-acid biosynthesis; L-cysteine biosynthesis; L-cysteine from L-homocysteine and L-serine: step 1/2. This chain is Cystathionine beta-synthase (CYS4), found in Saccharomyces cerevisiae (strain ATCC 204508 / S288c) (Baker's yeast).